The chain runs to 6919 residues: Nonribosomal peptide synthetase easA (6919 aa).

The Carrier 1 domain maps to 17–93 (TNNEVVEKDI…ELCQSVKLAE (77 aa)). Ser-54 carries the post-translational modification O-(pantetheine 4'-phosphoryl)serine. The segment at 123 to 427 (EAQKLYASTK…FLRKVKDTRM (305 aa)) is epimerization 1. A disordered region spans residues 294–319 (FRRSTPVESTNDERNTNERQHNRHQN). Residues 304–319 (NDERNTNERQHNRHQN) show a composition bias toward basic and acidic residues. Positions 604–981 (LNVELDCGRL…ISTTQEINQL (378 aa)) are condensation 1. The segment at 1003 to 1394 (QRLRRPDAWA…GRRDTQIKVR (392 aa)) is adenylation 1. Residues 1531–1608 (EPETLLERQV…QLAQTAEVKD (78 aa)) form the Carrier 2 domain. Ser-1569 is subject to O-(pantetheine 4'-phosphoryl)serine. Positions 1617-2031 (LLSPMQKWYF…ANAISALGTE (415 aa)) are epimerization 2. Residues 2072 to 2509 (VEDIYPCSPI…VGQLNTVTPK (438 aa)) are condensation 2. Residues 2541–2930 (RPNATAVCAW…ARKDSQVKVR (390 aa)) are adenylation 2. Residues 3067–3143 (APSTFMEKKL…EMAAHLEAQM (77 aa)) form the Carrier 3 domain. The residue at position 3104 (Ser-3104) is an O-(pantetheine 4'-phosphoryl)serine. The condensation 3 stretch occupies residues 3188–3599 (EDVYPCTPLQ…LLSKDEARRL (412 aa)). An adenylation 3 region spans residues 3620–4018 (QHVSTNPYAP…GRRDGQVKIR (399 aa)). The 78-residue stretch at 4151-4228 (TPSTSEEKNI…QLAKKAVIKT (78 aa)) folds into the Carrier 4 domain. The residue at position 4188 (Ser-4188) is an O-(pantetheine 4'-phosphoryl)serine. Positions 4282 to 4708 (ESIYYCSPIQ…EIDVIPTGDV (427 aa)) are condensation 4. The adenylation 4 stretch occupies residues 4732–5133 (EQALSQPGAQ…GRADGQIKIR (402 aa)). In terms of domain architecture, Carrier 5 spans 5260-5337 (ALSTETERRL…DMANTIANSE (78 aa)). Ser-5296 is modified (O-(pantetheine 4'-phosphoryl)serine). The tract at residues 5380–5775 (EDAYPCTPLQ…VFGQLQSAAN (396 aa)) is condensation 5. The interval 5824–6216 (SCPDAQAVHA…IGRRDTQVKI (393 aa)) is adenylation 5. The Carrier 6 domain maps to 6344 to 6421 (EPATVTERLL…DMATLIDRKT (78 aa)). O-(pantetheine 4'-phosphoryl)serine is present on Ser-6381.

It participates in antibiotic biosynthesis. Functionally, nonribosomal peptide synthetase; part of the gene cluster that mediates the biosynthesis of emericellamides, secondary metabolites acting as antibiotics. The biosynthesis of emericellamides initiates from the highly reducing polyketide synthase easB which catalyzes the formation of the linear polyketide chain. EasB produces several polyketides that can be further processed by the downstream enzymes. The polyketides are released from easB as linear polyketide carboxylic acids, which are converted to CoA thioesters by the acyl-CoA ligase easD. The substrates are then loaded onto the acyltransferase easC, which shuttles them to the first thiolation (T) domain of the nonribosomal peptide synthetase easA. EasA then performs condensation of the polyketides with one glycine, two alanine, one valine and one leucine residues. A last step of cyclization leads to the production of emericellamides. This chain is Nonribosomal peptide synthetase easA, found in Emericella nidulans (strain FGSC A4 / ATCC 38163 / CBS 112.46 / NRRL 194 / M139) (Aspergillus nidulans).